A 470-amino-acid chain; its full sequence is Monocarboxylate transporter 4 (470 aa).

Residues 1–17 lie on the Cytoplasmic side of the membrane; it reads MGGAVVDEGPTGIKAPD. Residues 18–38 form a helical membrane-spanning segment; sequence GGWGWAVLFGCFIITGFSYAF. The Extracellular segment spans residues 39 to 61; the sequence is PKAVSVFFKELMHEFGIGYSDTA. The chain crosses the membrane as a helical span at residues 62-82; that stretch reads WISSILLAMLYGTGPLCSVCV. The Cytoplasmic segment spans residues 83–84; that stretch reads NR. The helical transmembrane segment at 85–105 threads the bilayer; the sequence is FGCRPVMLVGGLFASLGMVAA. Residues 106–109 lie on the Extracellular side of the membrane; sequence SFCR. Residues 110–130 form a helical membrane-spanning segment; that stretch reads SIIQIYLTTGVITGLGLALNF. The Cytoplasmic portion of the chain corresponds to 131 to 149; sequence QPSLIMLNRYFNKRRPIAN. A helical transmembrane segment spans residues 150–170; it reads GLAAAGSPVFLCALSPLGQLL. At 171–179 the chain is on the extracellular side; sequence QDHYGWRGG. Residues 180-200 traverse the membrane as a helical segment; the sequence is FLILGGLLLNCCVCAALMRPL. Over 201–231 the chain is Cytoplasmic; that stretch reads VAPQVGGGTEPRGPQRPPQRLLDLSVFRDRG. The helical transmembrane segment at 232-252 threads the bilayer; the sequence is FLIYAVAASIMVLGLFVPPVF. The Extracellular portion of the chain corresponds to 253–267; the sequence is VVSYAKDMGVPDTKA. The chain crosses the membrane as a helical span at residues 268–288; that stretch reads AFLLTILGFIDIFARPTAGFI. The Cytoplasmic portion of the chain corresponds to 289–298; that stretch reads TGLKKVRPYS. The chain crosses the membrane as a helical span at residues 299–319; the sequence is VYLFSFAMFFNGFTDLTGSTA. The Extracellular portion of the chain corresponds to 320–321; sequence TD. The chain crosses the membrane as a helical span at residues 322 to 342; the sequence is YGGLVVFCIFFGISYGMVGAL. The Cytoplasmic segment spans residues 343–355; sequence QFEVLMAIVGTQK. A helical transmembrane segment spans residues 356–376; it reads FSSAIGLVLLLEAVAVLIGPP. The Extracellular portion of the chain corresponds to 377 to 391; the sequence is SGGKLLDATKVYKYV. The helical transmembrane segment at 392–412 threads the bilayer; that stretch reads FILAGAEVLTSSLVLLLGNFF. Residues 413–470 lie on the Cytoplasmic side of the membrane; the sequence is CIGKRKRPEVTEPEEVASEEKLHKPPVDVGVDSREVEHFLKAEPEKNGEVVHTPETSV. Basolateral sorting signal stretches follow at residues 429 to 446 and 446 to 470; these read ASEEKLHKPPVDVGVDSR and REVEHFLKAEPEKNGEVVHTPETSV. S430 bears the Phosphoserine mark. At T465 the chain carries Phosphothreonine. At S469 the chain carries Phosphoserine.

It belongs to the major facilitator superfamily. Monocarboxylate porter (TC 2.A.1.13) family. As to quaternary structure, interacts with BSG; interaction mediates SLC16A3 targeting to the plasma membrane.

It localises to the cell membrane. Its subcellular location is the basolateral cell membrane. It catalyses the reaction (S)-lactate(in) + H(+)(in) = (S)-lactate(out) + H(+)(out). The catalysed reaction is pyruvate(out) + H(+)(out) = pyruvate(in) + H(+)(in). In terms of biological role, proton-dependent transporter of monocarboxylates such as L-lactate and pyruvate. Plays a predominant role in the L-lactate efflux from highly glycolytic cells. The sequence is that of Monocarboxylate transporter 4 (Slc16a3) from Mus musculus (Mouse).